Reading from the N-terminus, the 258-residue chain is Beta carbonic anhydrase 3 (258 aa).

An N-terminal signal peptide occupies residues 1–28; it reads MSTESYEDAIKRLGELLSKKSDLGNVAA. The stretch at 24–54 forms a coiled coil; that stretch reads GNVAAAKIKKLTDELEELDSNKLDAVERIKS. Threonine 35 carries the phosphothreonine modification. Serine 95 bears the Phosphoserine mark. Cysteine 201 is subject to S-nitrosocysteine.

It belongs to the beta-class carbonic anhydrase family. As to expression, strongly expressed in aerial tissues including leaves, stems, flowers and siliques, and, to a lower extent, in roots.

Its subcellular location is the cytoplasm. It localises to the cytosol. It catalyses the reaction hydrogencarbonate + H(+) = CO2 + H2O. Its function is as follows. Reversible hydration of carbon dioxide. The sequence is that of Beta carbonic anhydrase 3 (BCA3) from Arabidopsis thaliana (Mouse-ear cress).